The primary structure comprises 831 residues: Leucine--tRNA ligase (831 aa).

The short motif at 36–46 (PYPSGKLHIGH) is the 'HIGH' region element. The 'KMSKS' region motif lies at 607–611 (KMSKS). Lysine 610 is an ATP binding site.

Belongs to the class-I aminoacyl-tRNA synthetase family.

It is found in the cytoplasm. It carries out the reaction tRNA(Leu) + L-leucine + ATP = L-leucyl-tRNA(Leu) + AMP + diphosphate. This chain is Leucine--tRNA ligase, found in Neorickettsia sennetsu (strain ATCC VR-367 / Miyayama) (Ehrlichia sennetsu).